A 603-amino-acid chain; its full sequence is Baeyer-Villiger monooxygenase (603 aa).

Residues glutamate 94, threonine 102 to tryptophan 105, aspartate 114, tyrosine 120, and valine 164 contribute to the FAD site. Histidine 112–aspartate 114 is an NADP(+) binding site. NADP(+) is bound by residues threonine 248–glutamine 254, arginine 271–threonine 272, and lysine 386–arginine 387.

The protein belongs to the FAD-binding monooxygenase family. FAD serves as cofactor.

In terms of biological role, catalyzes a Baeyer-Villiger oxidation reaction, i.e. the insertion of an oxygen atom into a carbon-carbon bond adjacent to a carbonyl, which converts ketones to esters or lactones using NADPH and/or NADH as an electron donor. Thus, can convert bicyclo[3.2.0]hept-2-en-6-one into the oxidative lactone products 2-oxabicyclo[3.3.0]oct-6-en-3-one and 3-oxabicyclo[3.3.0]oct-6-en-2-one. Is also able to catalyze the sulfoxidation of methyl phenyl sulfide (thioanisole). The sequence is that of Baeyer-Villiger monooxygenase from Streptomyces coelicolor (strain ATCC BAA-471 / A3(2) / M145).